The chain runs to 486 residues: tRNA sulfurtransferase (486 aa).

One can recognise a THUMP domain in the interval 60-166 (QKICAMLINI…DNQLFIIIKR (107 aa)). ATP is bound by residues 184–185 (LI), Lys266, Gly288, and Gln297. Cys345 and Cys458 form a disulfide bridge. A Rhodanese domain is found at 406 to 484 (LDSTDVVLDI…GFSNVKIYRP (79 aa)). The active-site Cysteine persulfide intermediate is the Cys458.

This sequence belongs to the ThiI family.

Its subcellular location is the cytoplasm. It catalyses the reaction [ThiI sulfur-carrier protein]-S-sulfanyl-L-cysteine + a uridine in tRNA + 2 reduced [2Fe-2S]-[ferredoxin] + ATP + H(+) = [ThiI sulfur-carrier protein]-L-cysteine + a 4-thiouridine in tRNA + 2 oxidized [2Fe-2S]-[ferredoxin] + AMP + diphosphate. The catalysed reaction is [ThiS sulfur-carrier protein]-C-terminal Gly-Gly-AMP + S-sulfanyl-L-cysteinyl-[cysteine desulfurase] + AH2 = [ThiS sulfur-carrier protein]-C-terminal-Gly-aminoethanethioate + L-cysteinyl-[cysteine desulfurase] + A + AMP + 2 H(+). It functions in the pathway cofactor biosynthesis; thiamine diphosphate biosynthesis. In terms of biological role, catalyzes the ATP-dependent transfer of a sulfur to tRNA to produce 4-thiouridine in position 8 of tRNAs, which functions as a near-UV photosensor. Also catalyzes the transfer of sulfur to the sulfur carrier protein ThiS, forming ThiS-thiocarboxylate. This is a step in the synthesis of thiazole, in the thiamine biosynthesis pathway. The sulfur is donated as persulfide by IscS. The sequence is that of tRNA sulfurtransferase from Blochmanniella pennsylvanica (strain BPEN).